A 275-amino-acid chain; its full sequence is Rhamnulose-1-phosphate aldolase (275 aa).

The active site involves E117. Zn(2+)-binding residues include H141, H143, and H212.

Belongs to the aldolase class II family. RhaD subfamily. Homotetramer. Requires Zn(2+) as cofactor.

It localises to the cytoplasm. It catalyses the reaction L-rhamnulose 1-phosphate = (S)-lactaldehyde + dihydroxyacetone phosphate. It participates in carbohydrate degradation; L-rhamnose degradation; glycerone phosphate from L-rhamnose: step 3/3. In terms of biological role, catalyzes the reversible cleavage of L-rhamnulose-1-phosphate to dihydroxyacetone phosphate (DHAP) and L-lactaldehyde. This is Rhamnulose-1-phosphate aldolase from Salmonella heidelberg (strain SL476).